The sequence spans 470 residues: Cysteine--tRNA ligase (470 aa).

Position 30 (C30) interacts with Zn(2+). The 'HIGH' region motif lies at 32 to 42; sequence PTVYNYIHIGN. 3 residues coordinate Zn(2+): C211, H236, and E240. Residues 268-272 carry the 'KMSKS' region motif; it reads KMSKS. K271 lines the ATP pocket.

Belongs to the class-I aminoacyl-tRNA synthetase family. In terms of assembly, monomer. Requires Zn(2+) as cofactor.

The protein localises to the cytoplasm. It carries out the reaction tRNA(Cys) + L-cysteine + ATP = L-cysteinyl-tRNA(Cys) + AMP + diphosphate. The polypeptide is Cysteine--tRNA ligase (Fervidobacterium nodosum (strain ATCC 35602 / DSM 5306 / Rt17-B1)).